We begin with the raw amino-acid sequence, 263 residues long: Large ribosomal subunit protein uL10m (263 aa).

A mitochondrion-targeting transit peptide spans 1–29 (MPFSVEVEVFFLLVEDKLGWLPTLQPVRH). The tract at residues 241–263 (QHEGDCATSTEGKPHPPDPAPDS) is disordered.

Belongs to the universal ribosomal protein uL10 family. As to quaternary structure, component of the mitochondrial ribosome large subunit (39S) which comprises a 16S rRNA and about 50 distinct proteins.

It is found in the mitochondrion. This is Large ribosomal subunit protein uL10m (Mrpl10) from Rattus norvegicus (Rat).